Reading from the N-terminus, the 257-residue chain is Large ribosomal subunit protein uL2 (257 aa).

The tract at residues 207–257 (VDHPHGGGNHQHVGHPTTLKRSSPPGQKAGKVAARRTGLIRGGNKEGAADN) is disordered.

Belongs to the universal ribosomal protein uL2 family. Component of the large ribosomal subunit.

The protein resides in the cytoplasm. Component of the large ribosomal subunit. The ribosome is a large ribonucleoprotein complex responsible for the synthesis of proteins in the cell. The polypeptide is Large ribosomal subunit protein uL2 (RPL8) (Entamoeba histolytica (strain ATCC 30459 / HM-1:IMSS / ABRM)).